We begin with the raw amino-acid sequence, 824 residues long: ABC transporter B family member 7 (824 aa).

The disordered stretch occupies residues 41–101 (RNSVKFNLDT…NKNNKNKINN (61 aa)). Residues 63-101 (NNNKNNNNNNNNNNNNNNNNNNNNNNNNNNKNNKNKINN) are compositionally biased toward low complexity. 6 consecutive transmembrane segments (helical) span residues 164 to 184 (IWYF…QLAL), 252 to 272 (WIII…LLFT), 325 to 345 (LSTL…LVFL), 347 to 367 (WKVT…FLVF), 431 to 451 (AFWI…IYGF), and 461 to 481 (ILLL…NGLI). An ABC transmembrane type-1 domain is found at 167–489 (FVFAFLALSI…LIGSINEIQK (323 aa)). Residues 521 to 767 (ISFDNVYFNN…STSFYVTSVL (247 aa)) form the ABC transporter domain. 570 to 576 (GPSQSKE) contributes to the ATP binding site. Positions 772 to 813 (NKYNNNNNNNNNNNNNNNNNNNNNNNNNNNNNNNNNNNNINN) are disordered.

Belongs to the ABC transporter superfamily. ABCB family.

It localises to the membrane. The chain is ABC transporter B family member 7 (abcB7) from Dictyostelium discoideum (Social amoeba).